Consider the following 205-residue polypeptide: Octanoyltransferase (205 aa).

The 176-residue stretch at 30–205 (NSSDELVWLL…ILKKEFYKIF (176 aa)) folds into the BPL/LPL catalytic domain. Residues 68 to 75 (RGGKYTYH), 140 to 142 (AFG), and 153 to 155 (GIA) each bind substrate. Cys171 functions as the Acyl-thioester intermediate in the catalytic mechanism.

It belongs to the LipB family.

It localises to the cytoplasm. It catalyses the reaction octanoyl-[ACP] + L-lysyl-[protein] = N(6)-octanoyl-L-lysyl-[protein] + holo-[ACP] + H(+). The protein operates within protein modification; protein lipoylation via endogenous pathway; protein N(6)-(lipoyl)lysine from octanoyl-[acyl-carrier-protein]: step 1/2. In terms of biological role, catalyzes the transfer of endogenously produced octanoic acid from octanoyl-acyl-carrier-protein onto the lipoyl domains of lipoate-dependent enzymes. Lipoyl-ACP can also act as a substrate although octanoyl-ACP is likely to be the physiological substrate. This is Octanoyltransferase from Wolbachia sp. subsp. Brugia malayi (strain TRS).